Here is a 718-residue protein sequence, read N- to C-terminus: Potassium channel KAT1 (718 aa).

Over 1 to 60 (MTQAHSKSCFHQFWDGLQIKRSSDSFTVELLPSLGATINHSNKLQKFIISPYDPRYRSWE) the chain is Cytoplasmic. A helical membrane pass occupies residues 61–81 (LFLIVLVVYSAWICPFELAFL). Over 82–88 (RDLPSKL) the chain is Extracellular. The chain crosses the membrane as a helical span at residues 89–109 (LLVENIVDIFFAIDIVLTFFV). Topologically, residues 110-132 (AYVDSKTHLLVDDRKRIAMRYLS) are cytoplasmic. A helical membrane pass occupies residues 133–153 (TWFIFDVCSTAPFQPIILLFT). Over 154–162 (HKGNDIAFK) the chain is Extracellular. A helical; Voltage-sensor membrane pass occupies residues 163-183 (VLNLLRLWRLHRVSSLFARLE). The Cytoplasmic segment spans residues 184-197 (KDIRFNYFWTRCSK). The helical transmembrane segment at 198–218 (LISVTLFAVHCAGCFNYMIAD) threads the bilayer. Residues 219-245 (RYPNPEKTWIGAVMSTFRSESLWTRYI) lie on the Extracellular side of the membrane. Residues 246 to 265 (TALYWSITTLTTTGYGDLHA) constitute an intramembrane region (pore-forming). Residues 266–269 (ENPT) are Extracellular-facing. The chain crosses the membrane as a helical span at residues 270-290 (EMLFDIVYMMFNLGLTAYLIG). At 291–718 (NMTNLVVHGT…DGDHLFLLEM (428 aa)) the chain is on the cytoplasmic side. 374-493 (LFNGVSGNFI…NILMNNLVQK (120 aa)) provides a ligand contact to a nucleoside 3',5'-cyclic phosphate. Positions 560-584 (EATRSSASENENSSMTDKEENHDEV) are disordered. The span at 562–574 (TRSSASENENSSM) shows a compositional bias: polar residues. The span at 575-584 (TDKEENHDEV) shows a compositional bias: basic and acidic residues. Residues 647–718 (RVTIHKYRHN…DGDHLFLLEM (72 aa)) form the KHA domain.

This sequence belongs to the potassium channel family. Plant (TC 1.A.1.4) subfamily.

It is found in the membrane. Its function is as follows. Probable inward-rectifying potassium channel. Assuming opened or closed conformations in response to the voltage difference across the membrane, the channel is activated by hyperpolarization. The chain is Potassium channel KAT1 from Oryza sativa subsp. japonica (Rice).